A 127-amino-acid chain; its full sequence is Putative truncated L-serine dehydratase YIL168W (127 aa).

Residue K39 is modified to N6-(pyridoxal phosphate)lysine.

Belongs to the serine/threonine dehydratase family. The cofactor is pyridoxal 5'-phosphate.

Its subcellular location is the cytoplasm. It carries out the reaction L-serine = pyruvate + NH4(+). It participates in carbohydrate biosynthesis; gluconeogenesis. The chain is Putative truncated L-serine dehydratase YIL168W from Saccharomyces cerevisiae (strain ATCC 204508 / S288c) (Baker's yeast).